The primary structure comprises 123 residues: Large ribosomal subunit protein bL19 (123 aa).

This sequence belongs to the bacterial ribosomal protein bL19 family.

Functionally, this protein is located at the 30S-50S ribosomal subunit interface and may play a role in the structure and function of the aminoacyl-tRNA binding site. This is Large ribosomal subunit protein bL19 (rplS) from Treponema pallidum (strain Nichols).